An 858-amino-acid polypeptide reads, in one-letter code: Protein translocase subunit SecA (858 aa).

ATP is bound by residues Gln88, 106–110, and Asp494; that span reads GEGKT. Residues 808 to 848 form a disordered region; that stretch reads KEDRGQLSYSGGGNAEDARNTPAKAAPRIGRNDPCPCGSGR. Cys842, Cys844, Cys853, and Cys854 together coordinate Zn(2+).

The protein belongs to the SecA family. As to quaternary structure, monomer and homodimer. Part of the essential Sec protein translocation apparatus which comprises SecA, SecYEG and auxiliary proteins SecDF-YajC and YidC. The cofactor is Zn(2+).

The protein resides in the cell inner membrane. The protein localises to the cytoplasm. It carries out the reaction ATP + H2O + cellular proteinSide 1 = ADP + phosphate + cellular proteinSide 2.. Functionally, part of the Sec protein translocase complex. Interacts with the SecYEG preprotein conducting channel. Has a central role in coupling the hydrolysis of ATP to the transfer of proteins into and across the cell membrane, serving as an ATP-driven molecular motor driving the stepwise translocation of polypeptide chains across the membrane. This chain is Protein translocase subunit SecA, found in Desulfovibrio desulfuricans (strain ATCC 27774 / DSM 6949 / MB).